The following is a 144-amino-acid chain: Large ribosomal subunit protein uL15 (144 aa).

Basic residues predominate over residues 1–13 (MVRERTKKLRGGH). Positions 1–32 (MVRERTKKLRGGHYGRGFKAGRGKGKKGGSGN) are disordered.

The protein belongs to the universal ribosomal protein uL15 family. Part of the 50S ribosomal subunit.

Its function is as follows. Binds to the 23S rRNA. In Thermoplasma acidophilum (strain ATCC 25905 / DSM 1728 / JCM 9062 / NBRC 15155 / AMRC-C165), this protein is Large ribosomal subunit protein uL15.